Reading from the N-terminus, the 165-residue chain is UPF0114 protein Ent638_3411 (165 aa).

Transmembrane regions (helical) follow at residues 15 to 35, 53 to 73, and 136 to 156; these read LLAP…IKFF, LILV…LVMV, and LMWY…MGYL.

This sequence belongs to the UPF0114 family.

It is found in the cell membrane. The polypeptide is UPF0114 protein Ent638_3411 (Enterobacter sp. (strain 638)).